The sequence spans 141 residues: Phosphoribosyl-AMP cyclohydrolase (141 aa).

Asp88 serves as a coordination point for Mg(2+). A Zn(2+)-binding site is contributed by Cys89. Mg(2+) contacts are provided by Asp90 and Asp92. 2 residues coordinate Zn(2+): Cys109 and Cys116.

The protein belongs to the PRA-CH family. Homodimer. Mg(2+) is required as a cofactor. The cofactor is Zn(2+).

It localises to the cytoplasm. It carries out the reaction 1-(5-phospho-beta-D-ribosyl)-5'-AMP + H2O = 1-(5-phospho-beta-D-ribosyl)-5-[(5-phospho-beta-D-ribosylamino)methylideneamino]imidazole-4-carboxamide. It participates in amino-acid biosynthesis; L-histidine biosynthesis; L-histidine from 5-phospho-alpha-D-ribose 1-diphosphate: step 3/9. Catalyzes the hydrolysis of the adenine ring of phosphoribosyl-AMP. The protein is Phosphoribosyl-AMP cyclohydrolase of Paracidovorax citrulli (strain AAC00-1) (Acidovorax citrulli).